A 164-amino-acid polypeptide reads, in one-letter code: MTDDLVNEYAPAFAPFFGFAGCAAAMILSSLGAAIGTAKSGIGISGIGTFRPELIMKSLIPVVMSGILAVYGLVVAVLVAGGLSPTEEYTLFNGFMHLAAGLCVGFACLSSGYAIGIVGDVGVRKFMHQPRLFVGIVLILIFAEVLGLYGMIIALILNTRGSGN.

Residues 1–15 are Lumenal-facing; that stretch reads MTDDLVNEYAPAFAP. A helical membrane pass occupies residues 16-36; sequence FFGFAGCAAAMILSSLGAAIG. The Cytoplasmic segment spans residues 37-58; sequence TAKSGIGISGIGTFRPELIMKS. Residues 59–79 form a helical membrane-spanning segment; the sequence is LIPVVMSGILAVYGLVVAVLV. The Lumenal portion of the chain corresponds to 80 to 97; sequence AGGLSPTEEYTLFNGFMH. Residues 98–118 form a helical membrane-spanning segment; it reads LAAGLCVGFACLSSGYAIGIV. The Cytoplasmic segment spans residues 119–135; the sequence is GDVGVRKFMHQPRLFVG. Residues 136 to 156 form a helical membrane-spanning segment; it reads IVLILIFAEVLGLYGMIIALI. The Lumenal portion of the chain corresponds to 157-164; sequence LNTRGSGN.

Belongs to the V-ATPase proteolipid subunit family. In terms of assembly, V-ATPase is a heteromultimeric enzyme composed of a peripheral catalytic V1 complex (components A to H) attached to an integral membrane V0 proton pore complex (components: a, c, c', c'', d, e, f and VOA1). The decameric c-ring forms the proton-conducting pore, and is composed of eight proteolipid subunits c, one subunit c' and one subunit c''.

Its subcellular location is the vacuole membrane. Functionally, proton-conducting pore forming subunit of the V0 complex of vacuolar(H+)-ATPase (V-ATPase), a multisubunit enzyme composed of a peripheral complex (V1) that hydrolyzes ATP and a membrane integral complex (V0) that translocates protons. V-ATPase is responsible for acidifying and maintaining the pH of intracellular compartments. The chain is V-type proton ATPase subunit c' (VMA11) from Eremothecium gossypii (strain ATCC 10895 / CBS 109.51 / FGSC 9923 / NRRL Y-1056) (Yeast).